The chain runs to 100 residues: Urease subunit gamma (100 aa).

It belongs to the urease gamma subunit family. Heterotrimer of UreA (gamma), UreB (beta) and UreC (alpha) subunits. Three heterotrimers associate to form the active enzyme.

It localises to the cytoplasm. It catalyses the reaction urea + 2 H2O + H(+) = hydrogencarbonate + 2 NH4(+). It functions in the pathway nitrogen metabolism; urea degradation; CO(2) and NH(3) from urea (urease route): step 1/1. This is Urease subunit gamma from Vibrio parahaemolyticus.